Here is a 1242-residue protein sequence, read N- to C-terminus: DNA polymerase catalytic subunit (1242 aa).

Disordered regions lie at residues 14 to 38 (GAVA…RPPQ), 644 to 665 (LQSA…SSSS), 877 to 898 (EGDS…GGSN), and 1108 to 1163 (TAPQ…KPPS). A compositionally biased stretch (low complexity) spans 653-665 (GVSPGSGSNSSSS). Residues 1110 to 1119 (PQGSSDNGDS) are compositionally biased toward polar residues. The span at 1145-1155 (ESNRRGGEPAK) shows a compositional bias: basic and acidic residues.

Belongs to the DNA polymerase type-B family. In terms of assembly, forms a complex with the ssDNA-binding protein UL57, the DNA polymerase processivity factor UL44, and the alkaline exonuclease UL98. Interacts with the putative helicase-primase complex composed of UL70, UL102 and UL105 proteins; these interactions may coordinate leading and lagging strand DNA synthesis at the replication fork.

It localises to the host nucleus. It carries out the reaction DNA(n) + a 2'-deoxyribonucleoside 5'-triphosphate = DNA(n+1) + diphosphate. Functionally, replicates viral genomic DNA in the late phase of lytic infection, producing long concatemeric DNA. The replication complex is composed of six viral proteins: the DNA polymerase, processivity factor, primase, primase-associated factor, helicase, and ssDNA-binding protein. This chain is DNA polymerase catalytic subunit (UL54), found in Homo sapiens (Human).